Here is a 192-residue protein sequence, read N- to C-terminus: Ribosome maturation factor RimM (192 aa).

One can recognise a PRC barrel domain in the interval 115 to 189; that stretch reads EGEYYLSDLI…RIEITPPKGL (75 aa).

The protein belongs to the RimM family. As to quaternary structure, binds ribosomal protein uS19.

It localises to the cytoplasm. In terms of biological role, an accessory protein needed during the final step in the assembly of 30S ribosomal subunit, possibly for assembly of the head region. Essential for efficient processing of 16S rRNA. May be needed both before and after RbfA during the maturation of 16S rRNA. It has affinity for free ribosomal 30S subunits but not for 70S ribosomes. This chain is Ribosome maturation factor RimM, found in Acaryochloris marina (strain MBIC 11017).